Here is a 986-residue protein sequence, read N- to C-terminus: Ubiquitin carboxyl-terminal hydrolase 37 (986 aa).

The KEN box 1 signature appears at 32–34 (KDN). 2 consecutive short sequence motifs (D-box) follow at residues 71 to 79 (CLMLTLKDT) and 96 to 105 (RMYLDAVHQD). Disordered stretches follow at residues 134-238 (NRQF…MSDP) and 251-305 (LKLK…KRSL). The segment covering 149 to 159 (VTVESKDETPF) has biased composition (basic and acidic residues). Residues 160–168 (RKVLGTPAR) carry the D-box 3 motif. The segment covering 171–195 (VKNSSGTGAPSNRVNVAASPTSSVP) has biased composition (polar residues). The KEN box 2 motif lies at 224–226 (KEN). Residues 251–260 (LKLKQEEENR) show a composition bias toward basic and acidic residues. Residues 269-298 (SSSYYGSRSSSKEYSTSSSTLDRSSVSSQT) show a composition bias toward low complexity. The 615-residue stretch at 344 to 958 (QGFSNLGNTC…SGYIFFYMHK (615 aa)) folds into the USP domain. Catalysis depends on Cys-353, which acts as the Nucleophile. 2 disordered regions span residues 683–710 (VQRG…GFDG) and 729–751 (SLSL…GDDE). The UIM 1 domain occupies 712–731 (SEDELLAAVLEISKREASLS). Over residues 729-739 (SLSLSHDEDKP) the composition is skewed to basic and acidic residues. The KEN box 3 signature appears at 789–791 (KEN). The segment at 811–840 (REREEQELQQALAQSLQEQEAREQKEDDDL) is disordered. 2 consecutive UIM domains span residues 813 to 832 (REEQ…QEAR) and 835 to 854 (KEDD…FNSS). Positions 818 to 828 (LQQALAQSLQE) are enriched in low complexity. The segment covering 829-840 (QEAREQKEDDDL) has biased composition (basic and acidic residues). His-913 serves as the catalytic Proton acceptor.

Belongs to the peptidase C19 family.

It carries out the reaction Thiol-dependent hydrolysis of ester, thioester, amide, peptide and isopeptide bonds formed by the C-terminal Gly of ubiquitin (a 76-residue protein attached to proteins as an intracellular targeting signal).. Functionally, deubiquitinase that antagonizes the anaphase-promoting complex (APC/C) during G1/S transition by mediating deubiquitination of APC/C target proteins, thereby promoting S phase entry. Specifically mediates deubiquitination of 'Lys-11'-linked polyubiquitin chains, a specific ubiquitin-linkage type mediated by the APC/C complex. This is Ubiquitin carboxyl-terminal hydrolase 37 (USP37) from Gallus gallus (Chicken).